The chain runs to 95 residues: IgNAR transmembrane form NE (95 aa).

The Ig-like domain maps to 1–36 (LTFSTRSLLNLPAVEWKSGAKYTCTASHSPSQSTVK). Positions 24–35 (CTASHSPSQSTV) are enriched in polar residues. The tract at residues 24–79 (CTASHSPSQSTVKRVIRNPKESPKGSSETRKSPLEIMESPEDYGTEEDQLENVNED) is disordered. The span at 41–56 (NPKESPKGSSETRKSP) shows a compositional bias: basic and acidic residues. The segment covering 61 to 77 (ESPEDYGTEEDQLENVN) has biased composition (acidic residues). N81 carries an N-linked (GlcNAc...) asparagine glycan.

Expressed mainly in lymphoid tissues including spleen, epigonal organ and circulating lymphocytes. Also expressed at low levels in the pancreas.

The chain is IgNAR transmembrane form NE from Ginglymostoma cirratum (Nurse shark).